The sequence spans 415 residues: Multidrug resistance protein MdtA (415 aa).

The first 21 residues, 1-21 (MKGSYKSRWVIVIVVVIAAIA), serve as a signal peptide directing secretion. 2 disordered regions span residues 32 to 59 (SRSA…SGPL) and 392 to 415 (EAQS…GARS). Over residues 399 to 415 (SEEKATSREYAKKGARS) the composition is skewed to basic and acidic residues.

Belongs to the membrane fusion protein (MFP) (TC 8.A.1) family. Part of a tripartite efflux system composed of MdtA, MdtB and MdtC.

The protein resides in the cell inner membrane. Functionally, the MdtABC tripartite complex confers resistance against novobiocin and deoxycholate. In Escherichia coli O17:K52:H18 (strain UMN026 / ExPEC), this protein is Multidrug resistance protein MdtA.